Here is a 1396-residue protein sequence, read N- to C-terminus: DNA-directed RNA polymerase subunit beta' (1396 aa).

Cys72, Cys74, Cys87, and Cys90 together coordinate Zn(2+). Mg(2+)-binding residues include Asp463, Asp465, and Asp467. Residues Cys814, Cys889, Cys896, and Cys899 each contribute to the Zn(2+) site.

The protein belongs to the RNA polymerase beta' chain family. The RNAP catalytic core consists of 2 alpha, 1 beta, 1 beta' and 1 omega subunit. When a sigma factor is associated with the core the holoenzyme is formed, which can initiate transcription. Requires Mg(2+) as cofactor. The cofactor is Zn(2+).

The enzyme catalyses RNA(n) + a ribonucleoside 5'-triphosphate = RNA(n+1) + diphosphate. DNA-dependent RNA polymerase catalyzes the transcription of DNA into RNA using the four ribonucleoside triphosphates as substrates. The protein is DNA-directed RNA polymerase subunit beta' of Chlamydia trachomatis serovar A (strain ATCC VR-571B / DSM 19440 / HAR-13).